The chain runs to 236 residues: Small ribosomal subunit protein uS2c (236 aa).

This sequence belongs to the universal ribosomal protein uS2 family.

Its subcellular location is the plastid. It localises to the chloroplast. The chain is Small ribosomal subunit protein uS2c (rps2) from Lolium perenne (Perennial ryegrass).